The primary structure comprises 502 residues: Tubulin gamma chain (502 aa).

Residues 51-68 (ELNNSGSSPQSYPQQTKP) show a composition bias toward polar residues. The interval 51 to 73 (ELNNSGSSPQSYPQQTKPNGKYR) is disordered. 169 to 175 (AGGTGSG) lines the GTP pocket. Residues 473–482 (DDEDDLEDGD) are compositionally biased toward acidic residues. Residues 473 to 502 (DDEDDLEDGDGGGGGNGNGYNNIDDADMGI) form a disordered region.

The protein belongs to the tubulin family.

Its subcellular location is the cytoplasm. It localises to the cytoskeleton. It is found in the microtubule organizing center. The protein localises to the spindle pole body. Tubulin is the major constituent of microtubules. The gamma chain is found at microtubule organizing centers (MTOC) such as the spindle poles or the centrosome, suggesting that it is involved in the minus-end nucleation of microtubule assembly. In Candida albicans (Yeast), this protein is Tubulin gamma chain (TUB4).